We begin with the raw amino-acid sequence, 105 residues long: Large ribosomal subunit protein uL24 (105 aa).

This sequence belongs to the universal ribosomal protein uL24 family. As to quaternary structure, part of the 50S ribosomal subunit.

In terms of biological role, one of two assembly initiator proteins, it binds directly to the 5'-end of the 23S rRNA, where it nucleates assembly of the 50S subunit. Functionally, one of the proteins that surrounds the polypeptide exit tunnel on the outside of the subunit. This is Large ribosomal subunit protein uL24 from Hahella chejuensis (strain KCTC 2396).